The primary structure comprises 240 residues: MTNITLSTQHYRIHRSDVEPVKEKTTEKDIFAKSITAVRNSFISLSTSLSDRFSLHQQTDIPTTHFHRGNASEGRAVLTSKTVKDFMLQKLNSLDIKGNASKDPAYARQTCEAILSAVYSNNKDQCCKLLISKGVSITPFLKEIGEAAQNAGLPGEIKNGVFTPGGAGANPFVVPLIASASIKYPHMFINHNQQVSFKAYAEKIVMKEVTPLFNKGTMPTPQQFQLTIENIANKYLQNAS.

Positions 78-240 (LTSKTVKDFM…IANKYLQNAS (163 aa)) are GEF catalytic domain.

This sequence belongs to the GEF (guanine exchange factor) SopE family.

The protein resides in the secreted. Its function is as follows. Activator for CDC42 by directly engaging this Rho GTPase and acting as potent guanine nucleotide exchange factor (GEF). This activation results in actin cytoskeleton rearrangements and stimulates membrane ruffling, promoting bacterial entry into non-phagocytic cells. Also activates NF-kB, p38 and ERK kinases, which are known to be involved in the induction of IL-8 expression. Chaperone InvB is required for secretion, translocation and stabilization of intracellular levels of sopE2. In Salmonella typhimurium (strain LT2 / SGSC1412 / ATCC 700720), this protein is Guanine nucleotide exchange factor sopE2 (sopE2).